The primary structure comprises 356 residues: Nitrilase, arylacetone-specific (356 aa).

Residues 7–280 enclose the CN hydrolase domain; the sequence is VRAAAVQAAS…EGLIIADLNM (274 aa). Glutamate 47 serves as the catalytic Proton acceptor. Lysine 129 (proton donor) is an active-site residue. Cysteine 163 (nucleophile) is an active-site residue. A disordered region spans residues 324–356; the sequence is QEEAPEPHVQSTAAPVAVSQTQDSDTLLVQEPS. The span at 332-356 shows a compositional bias: polar residues; sequence VQSTAAPVAVSQTQDSDTLLVQEPS.

This sequence belongs to the carbon-nitrogen hydrolase superfamily. Nitrilase family. As to quaternary structure, homohexamer.

The catalysed reaction is a nitrile + 2 H2O = a carboxylate + NH4(+). Nitrilase that acts mostly on arylacetonitriles. The polypeptide is Nitrilase, arylacetone-specific (Alcaligenes faecalis).